Here is a 621-residue protein sequence, read N- to C-terminus: Methionine--tRNA ligase (621 aa).

Residues 11 to 21 (PYANGPRHIGH) carry the 'HIGH' region motif. C143, C146, C156, and C159 together coordinate Zn(2+). The 'KMSKS' region motif lies at 347 to 351 (KFSSS). S350 serves as a coordination point for ATP.

This sequence belongs to the class-I aminoacyl-tRNA synthetase family. MetG type 1 subfamily. As to quaternary structure, monomer. It depends on Zn(2+) as a cofactor.

Its subcellular location is the cytoplasm. The catalysed reaction is tRNA(Met) + L-methionine + ATP = L-methionyl-tRNA(Met) + AMP + diphosphate. Is required not only for elongation of protein synthesis but also for the initiation of all mRNA translation through initiator tRNA(fMet) aminoacylation. In Bifidobacterium longum subsp. infantis (strain ATCC 15697 / DSM 20088 / JCM 1222 / NCTC 11817 / S12), this protein is Methionine--tRNA ligase.